The chain runs to 358 residues: Alanine racemase (358 aa).

K35 functions as the Proton acceptor; specific for D-alanine in the catalytic mechanism. K35 is subject to N6-(pyridoxal phosphate)lysine. Position 130 (R130) interacts with substrate. Y255 functions as the Proton acceptor; specific for L-alanine in the catalytic mechanism. Residue M303 participates in substrate binding.

The protein belongs to the alanine racemase family. Requires pyridoxal 5'-phosphate as cofactor.

The enzyme catalyses L-alanine = D-alanine. Its pathway is amino-acid biosynthesis; D-alanine biosynthesis; D-alanine from L-alanine: step 1/1. Functionally, catalyzes the interconversion of L-alanine and D-alanine. May also act on other amino acids. This Shewanella baltica (strain OS185) protein is Alanine racemase (alr).